The sequence spans 152 residues: Large ribosomal subunit protein eL14 (152 aa).

Belongs to the eukaryotic ribosomal protein eL14 family.

The protein is Large ribosomal subunit protein eL14 (RPL14) of Lumbricus rubellus (Humus earthworm).